A 353-amino-acid chain; its full sequence is Chorismate synthase (353 aa).

Position 48 (Arg48) interacts with NADP(+). Residues 125–127 (RSS), 238–239 (NA), Gly278, 293–297 (KPTSS), and Arg319 contribute to the FMN site.

Belongs to the chorismate synthase family. In terms of assembly, homotetramer. Requires FMNH2 as cofactor.

It catalyses the reaction 5-O-(1-carboxyvinyl)-3-phosphoshikimate = chorismate + phosphate. Its pathway is metabolic intermediate biosynthesis; chorismate biosynthesis; chorismate from D-erythrose 4-phosphate and phosphoenolpyruvate: step 7/7. Its function is as follows. Catalyzes the anti-1,4-elimination of the C-3 phosphate and the C-6 proR hydrogen from 5-enolpyruvylshikimate-3-phosphate (EPSP) to yield chorismate, which is the branch point compound that serves as the starting substrate for the three terminal pathways of aromatic amino acid biosynthesis. This reaction introduces a second double bond into the aromatic ring system. In Buchnera aphidicola subsp. Cinara cedri (strain Cc), this protein is Chorismate synthase.